We begin with the raw amino-acid sequence, 602 residues long: Elongation factor 4 (602 aa).

One can recognise a tr-type G domain in the interval 5–187 (DHIRNFSIIA…ALVKRIPAPK (183 aa)). GTP is bound by residues 17-22 (DHGKST) and 134-137 (NKID).

The protein belongs to the TRAFAC class translation factor GTPase superfamily. Classic translation factor GTPase family. LepA subfamily.

It localises to the cell inner membrane. It catalyses the reaction GTP + H2O = GDP + phosphate + H(+). Required for accurate and efficient protein synthesis under certain stress conditions. May act as a fidelity factor of the translation reaction, by catalyzing a one-codon backward translocation of tRNAs on improperly translocated ribosomes. Back-translocation proceeds from a post-translocation (POST) complex to a pre-translocation (PRE) complex, thus giving elongation factor G a second chance to translocate the tRNAs correctly. Binds to ribosomes in a GTP-dependent manner. This is Elongation factor 4 from Zymomonas mobilis subsp. mobilis (strain ATCC 31821 / ZM4 / CP4).